The sequence spans 307 residues: ATP synthase gamma chain (307 aa).

Belongs to the ATPase gamma chain family. F-type ATPases have 2 components, CF(1) - the catalytic core - and CF(0) - the membrane proton channel. CF(1) has five subunits: alpha(3), beta(3), gamma(1), delta(1), epsilon(1). CF(0) has three main subunits: a, b and c.

The protein localises to the cell membrane. Produces ATP from ADP in the presence of a proton gradient across the membrane. The gamma chain is believed to be important in regulating ATPase activity and the flow of protons through the CF(0) complex. The protein is ATP synthase gamma chain of Mycolicibacterium smegmatis (strain ATCC 700084 / mc(2)155) (Mycobacterium smegmatis).